A 429-amino-acid chain; its full sequence is MFS-type efflux pump MSMEG_3705 (429 aa).

12 helical membrane-spanning segments follow: residues 21–41 (AWAAVGVLALVGTLNYVDRFL), 59–79 (AIGVINGFGFLIVYAVMGIAV), 86–106 (GAFGAVVAGCLTLWGTMTMLG), 115–137 (LALTRVGVAIGEAGSTPAAHAYV), 150–170 (LAVITIAIPLASTASLLGGGL), 181–201 (FVIMGAVSVVLAPLVLLVVGV), 228–248 (FLIVVAGTAFISAAGYSLTTF), 264–284 (VGVEYGLATGAIGVLGLLIVG), 299–319 (LWIVVTLTLVLLPASVLAFVV), 327–347 (LFLALSYAIGTSYLAPSIAAI), 361–381 (AMFLFFNAVFGSVGPFVVGML), and 397–417 (ALLLLVAAMQLVGAICYWLAS).

This sequence belongs to the major facilitator superfamily.

It is found in the cell inner membrane. Functionally, probably plays a role in bacterial growth and resistance to antibiotics. This Mycolicibacterium smegmatis (strain ATCC 700084 / mc(2)155) (Mycobacterium smegmatis) protein is MFS-type efflux pump MSMEG_3705.